A 176-amino-acid polypeptide reads, in one-letter code: Tubulin polymerization-promoting protein family member 3 (176 aa).

Ala-2 is subject to N-acetylalanine.

This sequence belongs to the TPPP family.

It localises to the cytoplasm. Its subcellular location is the cytoskeleton. In terms of biological role, regulator of microtubule dynamic that has microtubule bundling activity. Required for embryo implantation; possibly by regulating beta-catenin. Also required for decidualization via regulation of beta-catenin. This Rattus norvegicus (Rat) protein is Tubulin polymerization-promoting protein family member 3 (Tppp3).